The sequence spans 343 residues: S-adenosylmethionine:tRNA ribosyltransferase-isomerase (343 aa).

This sequence belongs to the QueA family. As to quaternary structure, monomer.

It localises to the cytoplasm. The catalysed reaction is 7-aminomethyl-7-carbaguanosine(34) in tRNA + S-adenosyl-L-methionine = epoxyqueuosine(34) in tRNA + adenine + L-methionine + 2 H(+). Its pathway is tRNA modification; tRNA-queuosine biosynthesis. Its function is as follows. Transfers and isomerizes the ribose moiety from AdoMet to the 7-aminomethyl group of 7-deazaguanine (preQ1-tRNA) to give epoxyqueuosine (oQ-tRNA). This chain is S-adenosylmethionine:tRNA ribosyltransferase-isomerase, found in Hydrogenobaculum sp. (strain Y04AAS1).